The following is a 194-amino-acid chain: Adenylate kinase (194 aa).

11–16 (GSGKGT) serves as a coordination point for ATP. The NMP stretch occupies residues 31–60 (STGELLRAEIKAQTELGQAAAGYINEGHLV). AMP is bound by residues threonine 32, arginine 37, 58 to 60 (HLV), 86 to 89 (GFPR), and glutamine 93. The tract at residues 127 to 137 (NRGKISGRSDD) is LID. Residue arginine 128 participates in ATP binding. AMP-binding residues include arginine 134 and arginine 145. Residue glycine 173 participates in ATP binding.

Belongs to the adenylate kinase family. In terms of assembly, monomer.

The protein resides in the cytoplasm. The catalysed reaction is AMP + ATP = 2 ADP. Its pathway is purine metabolism; AMP biosynthesis via salvage pathway; AMP from ADP: step 1/1. Catalyzes the reversible transfer of the terminal phosphate group between ATP and AMP. Plays an important role in cellular energy homeostasis and in adenine nucleotide metabolism. The chain is Adenylate kinase from Porphyromonas gingivalis (strain ATCC 33277 / DSM 20709 / CIP 103683 / JCM 12257 / NCTC 11834 / 2561).